Consider the following 72-residue polypeptide: UPF0729 protein C18orf32 homolog (72 aa).

Positions 1-33 are necessary for its localzation to the endoplasmic reticulum and lipid droplets; that stretch reads MVCIPCIVIPVLLWIFKKFLEPYIYPVVSRIWP. A disordered region spans residues 36 to 72; it reads AVQQSGDKNMSKVDCKGAGTNGLPTKGPTEVSDKKKD.

This sequence belongs to the UPF0729 family. In terms of assembly, interacts with DERL1 and AMFR. In terms of processing, undergoes ER-associated degradation (ERAD).

It is found in the endoplasmic reticulum. It localises to the lipid droplet. May activate the NF-kappa-B signaling pathway. This Mus musculus (Mouse) protein is UPF0729 protein C18orf32 homolog.